The primary structure comprises 147 residues: uncharacterized protein (147 aa).

The next 2 membrane-spanning stretches (helical) occupy residues tyrosine 4–glycine 26 and tyrosine 123–phenylalanine 145.

It localises to the cell membrane. This is an uncharacterized protein from Treponema pallidum (strain Nichols).